Here is a 121-residue protein sequence, read N- to C-terminus: Chromosome transmission fidelity protein 8 homolog (121 aa).

The protein belongs to the CTF8 family. As to quaternary structure, component of the CTF18-RFC complex, which consists of CTF18, CTF8, DSCC1, RFC2, RFC3, RFC4 and RFC5. The CTF18-RFC complex does not interact with the Rad9/Rad1/Hus1 complex. The CTF18-RFC complex interacts with POLH. CTF18/CTF8/DSCC1 associate with PCNA. CTF8 exists as a dimer with DSCC1.

Its subcellular location is the nucleus. Functionally, chromosome cohesion factor involved in sister chromatid cohesion and fidelity of chromosome transmission. Component of one of the cell nuclear antigen loader complexes, CTF18-replication factor C (CTF18-RFC), which consists of CTF18, CTF8, DSCC1, RFC2, RFC3, RFC4 and RFC5. The CTF18-RFC complex binds to single-stranded and primed DNAs and has weak ATPase activity that is stimulated the presence of primed DNA, replication protein A (RPA) and proliferating cell nuclear antigen (PCNA). The CTF18-RFC complex catalyzes the ATP-dependent loading of PCNA onto primed and gapped DNA. It also interacts with and stimulates POLH, which is suggestive of a protein network that coordinates DNA repair, recombination and chromosome cohesion reactions with replication fork progression. This chain is Chromosome transmission fidelity protein 8 homolog, found in Rattus norvegicus (Rat).